The following is a 442-amino-acid chain: Ribosomal protein uS12 methylthiotransferase RimO (442 aa).

In terms of domain architecture, MTTase N-terminal spans 13-129; it reads RSIFLLSLGC…ILNILGTAYD (117 aa). Cys-22, Cys-58, Cys-92, Cys-153, Cys-157, and Cys-160 together coordinate [4Fe-4S] cluster. One can recognise a Radical SAM core domain in the interval 139-369; that stretch reads LSPSHYAWLK…MELQEGISEK (231 aa). The region spanning 372–439 is the TRAM domain; it reads RALEEKALKV…AYELVGRIKN (68 aa).

Belongs to the methylthiotransferase family. RimO subfamily. It depends on [4Fe-4S] cluster as a cofactor.

The protein resides in the cytoplasm. It catalyses the reaction L-aspartate(89)-[ribosomal protein uS12]-hydrogen + (sulfur carrier)-SH + AH2 + 2 S-adenosyl-L-methionine = 3-methylsulfanyl-L-aspartate(89)-[ribosomal protein uS12]-hydrogen + (sulfur carrier)-H + 5'-deoxyadenosine + L-methionine + A + S-adenosyl-L-homocysteine + 2 H(+). Catalyzes the methylthiolation of an aspartic acid residue of ribosomal protein uS12. This Chlorobium phaeobacteroides (strain BS1) protein is Ribosomal protein uS12 methylthiotransferase RimO.